The following is a 588-amino-acid chain: L-fucose isomerase (588 aa).

Catalysis depends on proton acceptor residues glutamate 335 and aspartate 359. Glutamate 335, aspartate 359, and histidine 525 together coordinate Mn(2+).

It belongs to the L-fucose isomerase family. The cofactor is Mn(2+).

It localises to the cytoplasm. The enzyme catalyses L-fucose = L-fuculose. Its pathway is carbohydrate degradation; L-fucose degradation; L-lactaldehyde and glycerone phosphate from L-fucose: step 1/3. Its function is as follows. Converts the aldose L-fucose into the corresponding ketose L-fuculose. This Streptococcus pneumoniae serotype 4 (strain ATCC BAA-334 / TIGR4) protein is L-fucose isomerase.